Reading from the N-terminus, the 565-residue chain is FAD-linked oxidoreductase ZEB1 (565 aa).

An N-terminal signal peptide occupies residues M1 to C27. 3 N-linked (GlcNAc...) asparagine glycosylation sites follow: N46, N82, and N100. The region spanning L115–G293 is the FAD-binding PCMH-type domain. N-linked (GlcNAc...) asparagine glycans are attached at residues N340, N352, and N421.

The protein belongs to the oxygen-dependent FAD-linked oxidoreductase family.

It functions in the pathway mycotoxin biosynthesis. In terms of biological role, FAD-linked oxidoreductase; part of the gene cluster that mediates the biosynthesis of zearalenone (ZEA), a nonsteroid estrogen that is a contaminant of cereal grains and causes estrogenic disorders in humans and animals. The ZEA backbone is synthesized from a single acetyl-CoA molecule and eight malonyl-CoA molecules. The reducing polyketide synthase ZEA2 is proposed to synthesize a reduced hexaketide intermediate by using different combinations of its reductive domains during each round of condensation. The hexaketide thioester is then transacylated to the non-reducing polyketide synthase ZEA1 and is further condensed with three malonyl-CoAs without reductive tailoring to yield a mixed reduced/unreduced nonaketide. ZEA1 must be able to interact with ZEA2 to facilitate starter-unit acyltransfer and initiate polyketide biosynthesis. ZEA1 also mediates the required C2-C7 cyclization to form the resorcylate core and catalyzes the formation of the macrolactone. ZEB1 is then responsible for the chemical conversion of beta-zearalenonol (beta-ZOL) to ZEA in the biosynthetic pathway. The polypeptide is FAD-linked oxidoreductase ZEB1 (Gibberella zeae (strain ATCC MYA-4620 / CBS 123657 / FGSC 9075 / NRRL 31084 / PH-1) (Wheat head blight fungus)).